Here is a 503-residue protein sequence, read N- to C-terminus: SusD-like protein P38 (503 aa).

Positions 1–21 (MKKFKNISITFLILISLGVLN) are cleaved as a signal peptide.

It belongs to the SusD family.

The protein resides in the cell outer membrane. Functionally, polysaccharide-binding protein probably involved in ulvan degradation. Ulvan is the main polysaccharide component of the Ulvales (green seaweed) cell wall. It is composed of disaccharide building blocks comprising 3-sulfated rhamnose (Rha3S) linked to D-glucuronic acid (GlcA), L-iduronic acid (IduA), or D-xylose (Xyl). The SusD-like protein may mediate ulvan oligomer-binding before transport in the periplasm for further degradation. This chain is SusD-like protein P38, found in Formosa agariphila (strain DSM 15362 / KCTC 12365 / LMG 23005 / KMM 3901 / M-2Alg 35-1).